The chain runs to 363 residues: Peptide chain release factor 1 (363 aa).

Glutamine 237 carries the post-translational modification N5-methylglutamine. The span at glutamate 287 to leucine 299 shows a compositional bias: basic and acidic residues. Positions glutamate 287–serine 306 are disordered.

The protein belongs to the prokaryotic/mitochondrial release factor family. In terms of processing, methylated by PrmC. Methylation increases the termination efficiency of RF1.

Its subcellular location is the cytoplasm. Peptide chain release factor 1 directs the termination of translation in response to the peptide chain termination codons UAG and UAA. The chain is Peptide chain release factor 1 from Ruthia magnifica subsp. Calyptogena magnifica.